We begin with the raw amino-acid sequence, 283 residues long: NAD kinase (283 aa).

Asp66 acts as the Proton acceptor in catalysis. NAD(+) contacts are provided by residues 66 to 67, 140 to 141, Arg151, Lys168, Asp170, 181 to 186, and Gln240; these read DG, ND, and TGYCLS.

The protein belongs to the NAD kinase family. A divalent metal cation is required as a cofactor.

It localises to the cytoplasm. It catalyses the reaction NAD(+) + ATP = ADP + NADP(+) + H(+). In terms of biological role, involved in the regulation of the intracellular balance of NAD and NADP, and is a key enzyme in the biosynthesis of NADP. Catalyzes specifically the phosphorylation on 2'-hydroxyl of the adenosine moiety of NAD to yield NADP. This is NAD kinase from Geobacter metallireducens (strain ATCC 53774 / DSM 7210 / GS-15).